Consider the following 338-residue polypeptide: Probable tRNA pseudouridine synthase B (338 aa).

Asp-82 functions as the Nucleophile in the catalytic mechanism. The PUA domain occupies 250-325 (LPKVWIRDSA…IAVDVDKVFM (76 aa)).

The protein belongs to the pseudouridine synthase TruB family. Type 2 subfamily.

It carries out the reaction uridine(55) in tRNA = pseudouridine(55) in tRNA. Functionally, could be responsible for synthesis of pseudouridine from uracil-55 in the psi GC loop of transfer RNAs. The polypeptide is Probable tRNA pseudouridine synthase B (Thermococcus kodakarensis (strain ATCC BAA-918 / JCM 12380 / KOD1) (Pyrococcus kodakaraensis (strain KOD1))).